The sequence spans 316 residues: MNTSITARELFDQQRDKLALRWVAGPKGEHREIQANSNNARRPSLAGYLNVIYPNKVQILGTEELAWLDSLDARQRWETIEKIIQVQPLALAISKNQSCPEDLRAAADESNTPLWISSKRGHELLNHLSYHLARTLAPRVTLHGVFMEIYSIGVLITGEAGSGKSELALELLSRGHRLVADDAPEFTQIAPDVLDGTCPELLQDLLEVRGLGVLNVRDMFGDTAVKKNKYLRLIVHLTRPMTEPTPSGYERLTGDSGSRHVLDLDVPLITLPVMPGRNLAVLTEAATRLHILRTKGIDPAAMFIARHSNLLERRTP.

Active-site residues include H143 and K164. Position 158–165 (158–165 (GEAGSGKS)) interacts with ATP. Mg(2+) is bound at residue S165. The active-site Proton acceptor; for phosphorylation activity. Proton donor; for dephosphorylation activity is D182. An important for the catalytic mechanism of both phosphorylation and dephosphorylation region spans residues 206-215 (LEVRGLGVLN). Residue E207 coordinates Mg(2+). R251 is a catalytic residue. Residues 272–277 (PVMPGR) are important for the catalytic mechanism of dephosphorylation.

The protein belongs to the HPrK/P family. In terms of assembly, homohexamer. Mg(2+) serves as cofactor.

It carries out the reaction [HPr protein]-L-serine + ATP = [HPr protein]-O-phospho-L-serine + ADP + H(+). The catalysed reaction is [HPr protein]-O-phospho-L-serine + phosphate + H(+) = [HPr protein]-L-serine + diphosphate. Functionally, catalyzes the ATP- as well as the pyrophosphate-dependent phosphorylation of a specific serine residue in HPr, a phosphocarrier protein of the phosphoenolpyruvate-dependent sugar phosphotransferase system (PTS). HprK/P also catalyzes the pyrophosphate-producing, inorganic phosphate-dependent dephosphorylation (phosphorolysis) of seryl-phosphorylated HPr (P-Ser-HPr). The protein is HPr kinase/phosphorylase of Xanthomonas axonopodis pv. citri (strain 306).